The following is an 83-amino-acid chain: Three-finger toxin MALT0066C (83 aa).

Positions 1–21 are cleaved as a signal peptide; it reads MKTLLLTLVVVTIVCLDFGHT. 4 disulfides stabilise this stretch: Cys24–Cys45, Cys38–Cys62, Cys64–Cys75, and Cys76–Cys81.

This sequence belongs to the three-finger toxin family. Short-chain subfamily. Type I alpha-neurotoxin sub-subfamily. In terms of assembly, dimer. In terms of tissue distribution, expressed by the venom gland.

The protein localises to the secreted. Functionally, binds to muscle nicotinic acetylcholine receptor (nAChR) and inhibit acetylcholine from binding to the receptor, thereby impairing neuromuscular transmission. The sequence is that of Three-finger toxin MALT0066C from Micrurus altirostris (Uruguayan coral snake).